The chain runs to 497 residues: MATMSNDAAAAATWHNNTSTPMDTTEPATNSHNPGETAVIGGPEALLLPSGSGPEEMNRHPLLMAQAHGEHHQPRLLHNFPVIPPPIQQHQQPPLLQQAQPSQIPHPTQPQIDPTMFTQQSGFNWPPIDPNTIAALAQAQLASSHAQFVSLALTLDPTLLSHFLATQQIPPVPQPLVHKKAEMELRVGNRFRLGRKIGSGSFGDIYLGQNIQTNEEVAVKLECVKSKHPQLHIESRLYRIMLGGIGIPEIRWCGQEGDYNVMVMELLGPSLEDLFNFCQRKFSLKTVLLLADQMLSRVEFIHCRDYIHRDIKPDNFLMGLGKRGNLVYIIDFGLAKRYRDSKHQHIAYRENKNLTGTARYASINTHRGIEQSRRDDIESLGYVFMYFNRGTLPWQGLKAVTKRQKYELISEKKISTRVDDLCAGYPEAFAQYLNYCRSLGFEEQPDYGYLRNLFRTLFHRQQFCYDYVFDWNTYKFYNESLEARNNFQQAVPNQRRH.

Disordered regions lie at residues 1-58 and 86-109; these read MATM…EEMN and PIQQHQQPPLLQQAQPSQIPHPTQ. The segment covering 14 to 34 has biased composition (polar residues); the sequence is WHNNTSTPMDTTEPATNSHNP. Residues 88-105 are compositionally biased toward low complexity; that stretch reads QQHQQPPLLQQAQPSQIP. A Protein kinase domain is found at 191 to 458; that stretch reads FRLGRKIGSG…YLRNLFRTLF (268 aa). ATP contacts are provided by residues 197–205 and K220; that span reads IGSGSFGDI. The active-site Proton acceptor is the D310.

The protein belongs to the protein kinase superfamily. CK1 Ser/Thr protein kinase family. Casein kinase I subfamily. As to quaternary structure, monomer. As to expression, expressed throughout larval development and into the adult stage in both hypodermal seam cells and the hermaphrodite specific neuron.

The protein resides in the cytoplasm. It localises to the nucleus. Its subcellular location is the chromosome. It is found in the centromere. The protein localises to the cell junction. The protein resides in the adherens junction. The catalysed reaction is L-seryl-[protein] + ATP = O-phospho-L-seryl-[protein] + ADP + H(+). The enzyme catalyses L-threonyl-[protein] + ATP = O-phospho-L-threonyl-[protein] + ADP + H(+). Its activity is regulated as follows. Exhibits substrate-dependent heparin activation. Essential serine/threonine-protein kinase that regulates diverse cellular growth and survival processes including Wnt signaling, DNA repair and circadian rhythms. Casein kinases are operationally defined by their preferential utilization of acidic proteins. Positively regulates the expression of components of the heterochronic pathway, which regulate developmental timing, such as the transcriptional repressor lin-42 and microRNAs such as let-7. Negatively regulates cell cycle exit and cell fusion to prevent the premature differentiation of hypodermal seam cells into adult cells. Plays a role in regulating axon branching and subsequently, the maturation of the nervous system, most likely by preventing the premature termination of transcripts for proteins such as Ankyrin/unc-44, which are required for maintaining the nervous system. May phosphorylate ssup-72 to promote nervous system maturation. The polypeptide is Casein kinase I isoform delta (Caenorhabditis elegans).